A 64-amino-acid polypeptide reads, in one-letter code: Bactridin-2 (64 aa).

Positions 1-63 constitute an LCN-type CS-alpha/beta domain; the sequence is KDGYLVGNDG…TWNRATNRCG (63 aa). 4 disulfides stabilise this stretch: C11-C62, C15-C37, C23-C43, and C27-C45.

It belongs to the long (4 C-C) scorpion toxin superfamily. Sodium channel inhibitor family. Beta subfamily. In terms of tissue distribution, expressed by the venom gland.

It is found in the secreted. In terms of biological role, shows antibacterial activity against both Gram-positive bacteria (B.subtilis, M.luteus, E.faecalis) and Gram-negative bacteria (P.aeruginosa, Y.enterocolitica, A.calcoaceticus). Modifies membrane sodium permeability on Y.enterocolitica. Is toxic to mice, but is not to crabs. Induces concentration dependent haemolysis in human erythrocytes. Acts by inhibiting the sodium (Nav) currents. In Tityus discrepans (Venezuelan scorpion), this protein is Bactridin-2.